Reading from the N-terminus, the 776-residue chain is E3 ubiquitin-protein ligase UHRF1 (776 aa).

In terms of domain architecture, Ubiquitin-like spans 1–78 (MWIQVRTMDG…VQLLVRQAVA (78 aa)). The segment at 88–126 (AELSDSDSGCGSAQSESDKGSTHGESDVQSAGASGQTDT) is disordered. Positions 93 to 102 (SDSGCGSAQS) are enriched in polar residues. The segment covering 103-113 (ESDKGSTHGES) has biased composition (basic and acidic residues). Positions 114-126 (DVQSAGASGQTDT) are enriched in polar residues. 2 tudor-like regions span residues 135-201 (GFYK…PRAR) and 208-277 (QLEP…IEEP). A disordered region spans residues 278–298 (GSAEGPGASSDSPLKKGSNGP). Residues 290 to 299 (PLKKGSNGPE) form a linker region. Residues 297–364 (GPECKVCKDD…DWYCPDCRND (68 aa)) form a PHD-type zinc finger. 2 histone H3R2me0 binding regions span residues 331–335 (CDECD) and 351–353 (PDD). One can recognise a YDG domain in the interval 417–580 (GPVPGVPVGT…FLVWRYLLKR (164 aa)). A required to promote base flipping region spans residues 443–444 (HV). DNA-binding positions include 461 to 462 (AG) and Asp-467. 2 required for formation of a 5-methylcytosine-binding pocket regions span residues 464 to 467 (YEDD) and 476 to 479 (YTGS). The disordered stretch occupies residues 617 to 660 (EKEKENKNEDDIEETPTKGKRKRKSQSMEEKSSPTKGTPKKMKV). Residue Ser-649 is modified to Phosphoserine; by CDK2. Residues 706 to 745 (CICCQEVVYQPITTECQHNVCRECLQRSFKAKVYTCPACR) form an RING-type zinc finger.

Phosphorylation at Ser-649 is required for gastrulation. As to expression, expressed in proliferating tissues. Highly expressed 24-48 hours after fertilization (hpf) in rapidly proliferating tissues, including the tectum, retina and brachial arches. Preferentially expressed in the liver bud and expression is maintained in the fully developed liver. Also expressed in the proximal gut. In adult, the highest expression is detected in testis.

The protein localises to the nucleus. It is found in the cytoplasm. The enzyme catalyses S-ubiquitinyl-[E2 ubiquitin-conjugating enzyme]-L-cysteine + [acceptor protein]-L-lysine = [E2 ubiquitin-conjugating enzyme]-L-cysteine + N(6)-ubiquitinyl-[acceptor protein]-L-lysine.. It functions in the pathway protein modification; protein ubiquitination. In terms of biological role, multidomain protein that acts as a key epigenetic regulator by bridging DNA methylation and chromatin modification. Specifically recognizes and binds hemimethylated DNA at replication forks via its YDG domain and recruits dnmt1 methyltransferase to ensure faithful propagation of the DNA methylation patterns through DNA replication. In addition to its role in maintenance of DNA methylation, also plays a key role in chromatin modification: through its tudor-like regions and PHD-type zinc fingers, specifically recognizes and binds histone H3 trimethylated at 'Lys-9' (H3K9me3) and unmethylated at 'Arg-2' (H3R2me0), respectively, and recruits chromatin proteins. Enriched in pericentric heterochromatin where it recruits different chromatin modifiers required for this chromatin replication. Also localizes to euchromatic regions where it negatively regulates transcription possibly by impacting DNA methylation and histone modifications. Has E3 ubiquitin-protein ligase activity by mediating the ubiquitination of target proteins. However, it is still unclear how E3 ubiquitin-protein ligase activity is related to its role in chromatin in vivo. Required for pregastrula and lens development. This Danio rerio (Zebrafish) protein is E3 ubiquitin-protein ligase UHRF1 (uhrf1).